Here is a 476-residue protein sequence, read N- to C-terminus: Protein transport protein Sec61 subunit alpha-like 2 (476 aa).

Residues 2 to 33 (AIKFLEVIKPFCAVLPEIQKPERRIQFKEKVL) are Cytoplasmic-facing. Residues 34-53 (WTAITLFIFLVCCQIPLFGI) traverse the membrane as a helical segment. Over 54-76 (MSSDSADPFYWMRVIMASNRGTL) the chain is Lumenal. The helical transmembrane segment at 77–96 (MELGISPIVTSGLIMQLLAG) threads the bilayer. At 97–117 (AKIIEVGDTPKDRALFNGAQK) the chain is on the cytoplasmic side. The helical transmembrane segment at 118–138 (LFGMIITIGQAVVYVMTGMYG) threads the bilayer. Residues 139 to 144 (DPSEMG) are Lumenal-facing. The chain crosses the membrane as a helical span at residues 145 to 165 (AGICLLIIIQLFVAGLIVLLL). Over 166-172 (DELLQKG) the chain is Cytoplasmic. Residues 173–193 (YGLGSGISLFIATNICETIVW) form a helical membrane-spanning segment. At 194 to 240 (KAFSPTTVNTGRGTEFEGAIIALFHLLATRTDKVRALREAFYRQNLP) the chain is on the lumenal side. The helical transmembrane segment at 241–261 (NLMNLIATIFVFAVVIYFQGF) threads the bilayer. At 262 to 288 (RVDLPIKSARYRGQYNTYPIKLFYTSN) the chain is on the cytoplasmic side. Residues 289 to 309 (IPIILQSALVSNLYVISQMLS) form a helical membrane-spanning segment. The Lumenal segment spans residues 310-354 (TRFSGNFLVNLLGTWSDTSTGGPARAYPVGGLCYYLSPPESFGTV). Residues 355–375 (LEDPIHAIIYIIFMLGSCAFF) traverse the membrane as a helical segment. The Cytoplasmic segment spans residues 376–420 (SKTWIEVSGSSAKDVAKQLKEQQMVMRGHRETSMVHELNRYIPTA). The chain crosses the membrane as a helical span at residues 421 to 441 (AAFGGLCIGGLSVMADFLGAI). The Lumenal portion of the chain corresponds to 442 to 445 (GSGT). The helical transmembrane segment at 446–462 (GILLAVTIIYQYFEIFV) threads the bilayer. Residues 463–476 (KEQSEVGSVGALLF) are Cytoplasmic-facing.

It belongs to the SecY/SEC61-alpha family. The SEC61 channel-forming translocon complex consists of channel-forming core components SEC61A1, SEC61B and SEC61G and different auxiliary components such as SEC62 and SEC63.

The protein resides in the endoplasmic reticulum membrane. Functionally, component of SEC61 channel-forming translocon complex that mediates transport of signal peptide-containing precursor polypeptides across the endoplasmic reticulum (ER). Forms a ribosome receptor and a gated pore in the ER membrane, both functions required for cotranslational translocation of nascent polypeptides. The polypeptide is Protein transport protein Sec61 subunit alpha-like 2 (sec61al2) (Danio rerio (Zebrafish)).